The primary structure comprises 875 residues: Alanine--tRNA ligase (875 aa).

Zn(2+) contacts are provided by H565, H569, C666, and H670.

The protein belongs to the class-II aminoacyl-tRNA synthetase family. Requires Zn(2+) as cofactor.

The protein resides in the cytoplasm. The catalysed reaction is tRNA(Ala) + L-alanine + ATP = L-alanyl-tRNA(Ala) + AMP + diphosphate. Functionally, catalyzes the attachment of alanine to tRNA(Ala) in a two-step reaction: alanine is first activated by ATP to form Ala-AMP and then transferred to the acceptor end of tRNA(Ala). Also edits incorrectly charged Ser-tRNA(Ala) and Gly-tRNA(Ala) via its editing domain. This is Alanine--tRNA ligase from Methylibium petroleiphilum (strain ATCC BAA-1232 / LMG 22953 / PM1).